Reading from the N-terminus, the 31-residue chain is Protamine PTP4 (31 aa).

A disordered region spans residues 1–31 (MPRRRRASRRIRRRRRPRVSRRRRGGRRRRR).

In terms of tissue distribution, testis.

The protein localises to the nucleus. It is found in the chromosome. Functionally, protamines substitute for histones in the chromatin of sperm during the haploid phase of spermatogenesis. They compact sperm DNA into a highly condensed, stable and inactive complex. The sequence is that of Protamine PTP4 from Oncorhynchus mykiss (Rainbow trout).